Consider the following 127-residue polypeptide: Glycine cleavage system H protein (127 aa).

Positions 22-104 (TVRIGITDFA…YDKAWMIVIE (83 aa)) constitute a Lipoyl-binding domain. An N6-lipoyllysine modification is found at Lys63.

It belongs to the GcvH family. As to quaternary structure, the glycine cleavage system is composed of four proteins: P, T, L and H. It depends on (R)-lipoate as a cofactor.

The glycine cleavage system catalyzes the degradation of glycine. The H protein shuttles the methylamine group of glycine from the P protein to the T protein. Its function is as follows. Is also involved in protein lipoylation via its role as an octanoyl/lipoyl carrier protein intermediate. This chain is Glycine cleavage system H protein, found in Anoxybacillus flavithermus (strain DSM 21510 / WK1).